We begin with the raw amino-acid sequence, 305 residues long: Glutaminase (305 aa).

Positions 63, 113, 158, 165, 189, 241, and 259 each coordinate substrate.

The protein belongs to the glutaminase family. As to quaternary structure, homotetramer.

It catalyses the reaction L-glutamine + H2O = L-glutamate + NH4(+). This chain is Glutaminase, found in Aliarcobacter butzleri (strain RM4018) (Arcobacter butzleri).